The primary structure comprises 378 residues: RNA polymerase sigma factor SigA (378 aa).

A disordered region spans residues 1–29 (MKNKTEVKNGGEKKNSKKVSKEESAKEKN). The interval 145–215 (LAEANLRLVV…TRAIADQART (71 aa)) is sigma-70 factor domain-2. Positions 169 to 172 (DLIQ) match the Interaction with polymerase core subunit RpoC motif. A sigma-70 factor domain-3 region spans residues 224 to 300 (ETINKLIRVS…DDEAPAPADA (77 aa)). The sigma-70 factor domain-4 stretch occupies residues 313-366 (ILNTLTPREEKVLRLRFGLDDGRARTLEEVGKEFNVTRERIRQIEAKALRKLRH). Residues 339 to 358 (LEEVGKEFNVTRERIRQIEA) constitute a DNA-binding region (H-T-H motif).

It belongs to the sigma-70 factor family. RpoD/SigA subfamily. Interacts transiently with the RNA polymerase catalytic core.

It localises to the cytoplasm. Sigma factors are initiation factors that promote the attachment of RNA polymerase to specific initiation sites and are then released. This sigma factor is the primary sigma factor during exponential growth. The polypeptide is RNA polymerase sigma factor SigA (Clostridium acetobutylicum (strain ATCC 824 / DSM 792 / JCM 1419 / IAM 19013 / LMG 5710 / NBRC 13948 / NRRL B-527 / VKM B-1787 / 2291 / W)).